The sequence spans 342 residues: Holliday junction branch migration complex subunit RuvB (342 aa).

The large ATPase domain (RuvB-L) stretch occupies residues 1-184; sequence MEEDFNIRDH…FGINLHLEYY (184 aa). ATP is bound by residues Leu23, Arg24, Gly65, Lys68, Thr69, Thr70, 131-133, Arg174, Tyr184, and Arg221; that span reads EDY. Thr69 serves as a coordination point for Mg(2+). Residues 185-255 are small ATPAse domain (RuvB-S); sequence DDDILSNIIS…IANYALEALN (71 aa). The interval 258–342 is head domain (RuvB-H); sequence KYGLDEIDNK…YNSQKTLFND (85 aa). The DNA site is built by Arg313 and Arg318.

It belongs to the RuvB family. As to quaternary structure, homohexamer. Forms an RuvA(8)-RuvB(12)-Holliday junction (HJ) complex. HJ DNA is sandwiched between 2 RuvA tetramers; dsDNA enters through RuvA and exits via RuvB. An RuvB hexamer assembles on each DNA strand where it exits the tetramer. Each RuvB hexamer is contacted by two RuvA subunits (via domain III) on 2 adjacent RuvB subunits; this complex drives branch migration. In the full resolvosome a probable DNA-RuvA(4)-RuvB(12)-RuvC(2) complex forms which resolves the HJ.

The protein localises to the cytoplasm. It carries out the reaction ATP + H2O = ADP + phosphate + H(+). Functionally, the RuvA-RuvB-RuvC complex processes Holliday junction (HJ) DNA during genetic recombination and DNA repair, while the RuvA-RuvB complex plays an important role in the rescue of blocked DNA replication forks via replication fork reversal (RFR). RuvA specifically binds to HJ cruciform DNA, conferring on it an open structure. The RuvB hexamer acts as an ATP-dependent pump, pulling dsDNA into and through the RuvAB complex. RuvB forms 2 homohexamers on either side of HJ DNA bound by 1 or 2 RuvA tetramers; 4 subunits per hexamer contact DNA at a time. Coordinated motions by a converter formed by DNA-disengaged RuvB subunits stimulates ATP hydrolysis and nucleotide exchange. Immobilization of the converter enables RuvB to convert the ATP-contained energy into a lever motion, pulling 2 nucleotides of DNA out of the RuvA tetramer per ATP hydrolyzed, thus driving DNA branch migration. The RuvB motors rotate together with the DNA substrate, which together with the progressing nucleotide cycle form the mechanistic basis for DNA recombination by continuous HJ branch migration. Branch migration allows RuvC to scan DNA until it finds its consensus sequence, where it cleaves and resolves cruciform DNA. In Bacteroides fragilis (strain ATCC 25285 / DSM 2151 / CCUG 4856 / JCM 11019 / LMG 10263 / NCTC 9343 / Onslow / VPI 2553 / EN-2), this protein is Holliday junction branch migration complex subunit RuvB.